The primary structure comprises 262 residues: Shikimate dehydrogenase (NADP(+)) (262 aa).

Residues serine 15–serine 17 and threonine 62 each bind shikimate. Lysine 66 (proton acceptor) is an active-site residue. An NADP(+)-binding site is contributed by glutamate 78. Shikimate contacts are provided by asparagine 87 and aspartate 102. NADP(+) is bound by residues glycine 126–alanine 130, asparagine 150–arginine 155, and methionine 214. Residue tyrosine 216 participates in shikimate binding. Residue glycine 236 participates in NADP(+) binding.

Belongs to the shikimate dehydrogenase family. In terms of assembly, homodimer.

It carries out the reaction shikimate + NADP(+) = 3-dehydroshikimate + NADPH + H(+). Its pathway is metabolic intermediate biosynthesis; chorismate biosynthesis; chorismate from D-erythrose 4-phosphate and phosphoenolpyruvate: step 4/7. Its function is as follows. Involved in the biosynthesis of the chorismate, which leads to the biosynthesis of aromatic amino acids. Catalyzes the reversible NADPH linked reduction of 3-dehydroshikimate (DHSA) to yield shikimate (SA). The sequence is that of Shikimate dehydrogenase (NADP(+)) from Acinetobacter baylyi (strain ATCC 33305 / BD413 / ADP1).